The chain runs to 363 residues: G-protein coupled receptor 4 (363 aa).

Over 1-8 (MGNGTWEG) the chain is Extracellular. N-linked (GlcNAc...) asparagine glycosylation occurs at N3. Residues 9–45 (CHVDSRVDHLFPPSLYIFVIGVGLPTNCLALWAAYRQ) form a helical membrane-spanning segment. 2 disulfides stabilise this stretch: C9–C258 and C90–C168. At 46-49 (VRQR) the chain is on the cytoplasmic side. Residues 50–80 (NELGVYLMNLSIADLLYICTLPLWVDYFLHH) form a helical membrane-spanning segment. At 81 to 85 (DNWIH) the chain is on the extracellular side. A helical membrane pass occupies residues 86–121 (GPGSCKLFGFIFYTNIYISIAFLCCISVDRYLAVAH). Topologically, residues 122-129 (PLRFARLR) are cytoplasmic. Residues 130–156 (RVKTAVAVSSVVWATELGANSVPLFHD) form a helical membrane-spanning segment. Residues 157 to 172 (ELFRDRYNHTFCFEKF) lie on the Extracellular side of the membrane. The segment at 157 to 172 (ELFRDRYNHTFCFEKF) is extracellular loop 2 (ECL2). An N-linked (GlcNAc...) asparagine glycan is attached at N164. The helical transmembrane segment at 173–210 (PMEGWVAWMNLYRVFVGFLFPWALMLLSYRGILRAVRG) threads the bilayer. Residues 211-214 (SVST) are Cytoplasmic-facing. The chain crosses the membrane as a helical span at residues 215-250 (ERQEKAKIKRLALSLIAIVLVCFAPYHVLLLSRSAV). Residues 251 to 260 (YLGHPWDCGF) lie on the Extracellular side of the membrane. A helical transmembrane segment spans residues 261-289 (EERVFSAYHSSLAFTSLNCVADPILYCLV). Over 290–363 (NEGARSDVAK…QLKMLPPPAP (74 aa)) the chain is Cytoplasmic. The tract at residues 344–363 (ASPPSQGDQVQLKMLPPPAP) is disordered.

Belongs to the G-protein coupled receptor 1 family.

It localises to the cell membrane. Activated by a network of residues that connects an extracellular-facing cavity to Glu-145, a conserved charged residue buried in the transmembrane core of the receptor. Protonation likely drives conformational changes in extracellular loop 2 (ECL2), which stabilizes movement of transmembrane 3 (TM3) and a series of rearrangements that connect the extracellular-facing cavity to Glu-145, a residue only conserved in proton-sensing G-protein coupled receptors. Functionally, proton-sensing G-protein coupled receptor activated by extracellular pH, which is required to monitor pH changes and generate adaptive reactions. Activated by an optimal pH of 6.8-7.2. Ligand binding causes a conformation change that triggers signaling via guanine nucleotide-binding proteins (G proteins) and modulates the activity of downstream effectors, such as adenylate cyclase. GPR4 is mainly coupled to G(s) G proteins and mediates activation of adenylate cyclase activity. May also couple with G(q) and G(12)/G(13) G proteins. Acts as a key regulator of respiratory sensitivity to CO2/H(+) in brain retrotrapezoid nucleus neurons: acts by mediating detection of protons generated by the formation of carbonic acid in the blood, an important mechanism to impulse to breathe. Also acts as a regulator of acid secretion in the kidney collecting duct by maintaining acid-base homeostasis in the kidney. Acidosis-induced GPR4 activation increases paracellular gap formation and permeability of vascular endothelial cells, possibly through the G(12)/G(13)/Rho GTPase signaling pathway. This is G-protein coupled receptor 4 (GPR4) from Sus scrofa (Pig).